We begin with the raw amino-acid sequence, 222 residues long: Vesicle transport v-SNARE 12 (222 aa).

Ser2 is modified (N-acetylserine). Residues 2 to 199 are Cytoplasmic-facing; sequence SDVFEGYERQ…MSRRMTRNKW (198 aa). A coiled-coil region spans residues 68-95; it reads KAVCLSKLREYKSDLNQLKKEFKRVSSA. A helical; Anchor for type IV membrane protein transmembrane segment spans residues 200–220; it reads IITSVIVALVLAIILIISYKL. The Vesicular portion of the chain corresponds to 221–222; that stretch reads SH.

The protein belongs to the VTI1 family. In terms of assembly, forms SNARE complexes with the t-SNAREs SYP61 and either SYP41 or SYP42, and with a much lower affinity with SYP51 in the TGN. Also interacts with VPS45, a Sec1 protein, but not with SYP21 or SYP22. Binds to EPSIN2. Core constituent of the SNARE complex required for membrane fusion at the trans-Golgi network. Interacts with SCYL2B. As to expression, expressed in roots, stems, flowers and leaves.

Its subcellular location is the golgi apparatus. The protein localises to the trans-Golgi network membrane. The protein resides in the prevacuolar compartment membrane. It is found in the cell membrane. Its function is as follows. Together with either SYP41 or SYP61, required for membrane fusion; the fusion of phospholipid vesicles containing SYP41 or SYP61 and VTI12 is triggered by YKT61 and YKT62. Functions as a v-SNARE responsible for the docking or fusion of transport vesicles within the trans-Golgi network (TGN) and mediates liposome fusion. Necessary to deliver proteins to the protein storage vacuole (PSV). May be also involved in retrograde traffic to the cis-Golgi. The sequence is that of Vesicle transport v-SNARE 12 from Arabidopsis thaliana (Mouse-ear cress).